The sequence spans 264 residues: Phosphonates import ATP-binding protein PhnC (264 aa).

Residues 7–254 (LSIRAASKTF…KLIDIYGPEF (248 aa)) enclose the ABC transporter domain. ATP is bound at residue 39–46 (GPSGSGKS).

The protein belongs to the ABC transporter superfamily. Phosphonates importer (TC 3.A.1.9.1) family. The complex is composed of two ATP-binding proteins (PhnC), two transmembrane proteins (PhnE) and a solute-binding protein (PhnD).

It is found in the cell inner membrane. It carries out the reaction phosphonate(out) + ATP + H2O = phosphonate(in) + ADP + phosphate + H(+). Its function is as follows. Part of the ABC transporter complex PhnCDE involved in phosphonates import. Responsible for energy coupling to the transport system. The protein is Phosphonates import ATP-binding protein PhnC of Caulobacter vibrioides (strain ATCC 19089 / CIP 103742 / CB 15) (Caulobacter crescentus).